Here is a 438-residue protein sequence, read N- to C-terminus: Xanthine permease (438 aa).

13 helical membrane-spanning segments follow: residues 11–31 (LGIQHVLAMYAGAIVVPLIVG), 41–61 (LTYLVSIDIFMCGVATLLQVW), 65–85 (FFGIGLPVVLGCTFTAVSPMI), 100–120 (IIASGILVILISFFFGKLVSF), 121–141 (FPPVVTGSVVTIIGITLMPVA), 154–174 (FGDLSNLALAFTVLSIIVLLY), 180–200 (FIKSVSILIGILIGTFIAYFM), 220–240 (FYFGAPSFHAAPIITMSIVAI), 272–292 (AEGLAVLLGGIFNAFPYTAFS), 308–328 (VIVVTGVILMAFGLFPKIAAF), 331–351 (IIPSAVLGGAMVAMFGMVIAY), 367–387 (LLIVACSVGLGLGVTVVPDIF), and 396–416 (LLTTNGIVAGSFTAVVLNIVY).

The protein belongs to the nucleobase:cation symporter-2 (NCS2) (TC 2.A.40) family.

The protein localises to the cell membrane. In terms of biological role, transport of xanthine in the cell. The chain is Xanthine permease (pbuX) from Bacillus subtilis (strain 168).